A 249-amino-acid chain; its full sequence is 5'-nucleotidase SurE (249 aa).

A divalent metal cation is bound by residues aspartate 9, aspartate 10, serine 40, and asparagine 92.

It belongs to the SurE nucleotidase family. A divalent metal cation is required as a cofactor.

Its subcellular location is the cytoplasm. It catalyses the reaction a ribonucleoside 5'-phosphate + H2O = a ribonucleoside + phosphate. Its function is as follows. Nucleotidase that shows phosphatase activity on nucleoside 5'-monophosphates. This is 5'-nucleotidase SurE from Shewanella sp. (strain MR-4).